We begin with the raw amino-acid sequence, 402 residues long: Type II NADH:quinone oxidoreductase (402 aa).

Residues 12–16, 39–40, and V83 contribute to the FAD site; these read GAGYA and NK. E172 is a catalytic residue. Residues D302, 319-320, and K379 contribute to the FAD site; that span reads AQ.

It belongs to the NADH dehydrogenase family. FAD serves as cofactor.

The protein resides in the cell membrane. It carries out the reaction a quinone + NADH + H(+) = a quinol + NAD(+). Its function is as follows. Alternative, nonproton pumping NADH:quinone oxidoreductase that delivers electrons to the respiratory chain by oxidation of NADH and reduction of quinones, and contributes to the regeneration of NAD(+). This chain is Type II NADH:quinone oxidoreductase, found in Staphylococcus aureus (strain MSSA476).